The sequence spans 154 residues: 6,7-dimethyl-8-ribityllumazine synthase (154 aa).

5-amino-6-(D-ribitylamino)uracil-binding positions include Phe26, 60 to 62 (ALE), and 84 to 86 (CII). (2S)-2-hydroxy-3-oxobutyl phosphate is bound at residue 89-90 (ET). The active-site Proton donor is the His92. Residue Asn117 coordinates 5-amino-6-(D-ribitylamino)uracil. (2S)-2-hydroxy-3-oxobutyl phosphate is bound at residue Arg131.

It belongs to the DMRL synthase family.

The catalysed reaction is (2S)-2-hydroxy-3-oxobutyl phosphate + 5-amino-6-(D-ribitylamino)uracil = 6,7-dimethyl-8-(1-D-ribityl)lumazine + phosphate + 2 H2O + H(+). It participates in cofactor biosynthesis; riboflavin biosynthesis; riboflavin from 2-hydroxy-3-oxobutyl phosphate and 5-amino-6-(D-ribitylamino)uracil: step 1/2. Functionally, catalyzes the formation of 6,7-dimethyl-8-ribityllumazine by condensation of 5-amino-6-(D-ribitylamino)uracil with 3,4-dihydroxy-2-butanone 4-phosphate. This is the penultimate step in the biosynthesis of riboflavin. The chain is 6,7-dimethyl-8-ribityllumazine synthase from Leptothrix cholodnii (strain ATCC 51168 / LMG 8142 / SP-6) (Leptothrix discophora (strain SP-6)).